Consider the following 1394-residue polypeptide: Tubulin glycylase 3E (1394 aa).

Disordered stretches follow at residues 201 to 230 (KKKS…QRKE), 563 to 582 (NQKD…QNSI), 620 to 663 (DENE…TSNF), and 682 to 706 (STVK…NLKE). Low complexity predominate over residues 205 to 216 (NFQNKSQSQLNN). Residues 217–230 (HKNEEKKPSQQRKE) show a composition bias toward basic and acidic residues. A compositionally biased stretch (low complexity) spans 568–582 (QSNQTSSVISQQNSI). Residues 627–655 (KENVLQQKKNQSNQIVTSQQQSNNYFKQE) show a composition bias toward polar residues. The span at 682-703 (STVKNSDNNNQNQTNPQNQNTN) shows a compositional bias: low complexity. A TTL domain is found at 911–1250 (RFIFNITVIA…QNNLQEDLEI (340 aa)). ATP-binding positions include 1058–1061 (QKYI), Lys-1079, and Asp-1081. 2 consecutive IQ domains span residues 1320-1349 (QYWG…QKFT) and 1348-1377 (FTFA…QQQT).

The protein resides in the cell projection. The protein localises to the cilium. Its subcellular location is the cytoplasm. It is found in the cytoskeleton. It localises to the cilium axoneme. Probable glycylase which modifies tubulin, generating side chains of glycine on the gamma-carboxyl groups of specific glutamate residues within the C-terminal tail of tubulin. The chain is Tubulin glycylase 3E (TTLL3E) from Tetrahymena thermophila (strain SB210).